The following is a 39-amino-acid chain: Bacteriocin E50-52 (39 aa).

The protein localises to the secreted. Functionally, bacteriocin active against the Gram-negative bacteria C.jejuni, Y.enterocolitica and Y.pseudotuberculosis, and the Gram-positive bacteria S.aureus, S.epidermidis, L.monocytogenes and Listeria spp. When added to the drinking water of chickens, causes a decrease in the levels of C.jejuni and S.enteritidis in the ceca, and in the levels of S.enteritidis in the liver and spleen. The protein is Bacteriocin E50-52 of Enterococcus faecium (Streptococcus faecium).